The chain runs to 286 residues: Bifunctional protein FolD (286 aa).

NADP(+)-binding positions include 165–167 (GRS), Ser190, and Ile231.

It belongs to the tetrahydrofolate dehydrogenase/cyclohydrolase family. Homodimer.

The catalysed reaction is (6R)-5,10-methylene-5,6,7,8-tetrahydrofolate + NADP(+) = (6R)-5,10-methenyltetrahydrofolate + NADPH. The enzyme catalyses (6R)-5,10-methenyltetrahydrofolate + H2O = (6R)-10-formyltetrahydrofolate + H(+). The protein operates within one-carbon metabolism; tetrahydrofolate interconversion. Functionally, catalyzes the oxidation of 5,10-methylenetetrahydrofolate to 5,10-methenyltetrahydrofolate and then the hydrolysis of 5,10-methenyltetrahydrofolate to 10-formyltetrahydrofolate. In Thermodesulfovibrio yellowstonii (strain ATCC 51303 / DSM 11347 / YP87), this protein is Bifunctional protein FolD.